The primary structure comprises 273 residues: Phosphatidylglycerol--prolipoprotein diacylglyceryl transferase (273 aa).

The next 3 membrane-spanning stretches (helical) occupy residues leucine 20–alanine 40, phenylalanine 59–tyrosine 79, and glycine 97–tryptophan 117. Arginine 142 contributes to the a 1,2-diacyl-sn-glycero-3-phospho-(1'-sn-glycerol) binding site. Helical transmembrane passes span phenylalanine 206–phenylalanine 226 and methionine 243–methionine 263.

The protein belongs to the Lgt family.

It is found in the cell inner membrane. The catalysed reaction is L-cysteinyl-[prolipoprotein] + a 1,2-diacyl-sn-glycero-3-phospho-(1'-sn-glycerol) = an S-1,2-diacyl-sn-glyceryl-L-cysteinyl-[prolipoprotein] + sn-glycerol 1-phosphate + H(+). It functions in the pathway protein modification; lipoprotein biosynthesis (diacylglyceryl transfer). Catalyzes the transfer of the diacylglyceryl group from phosphatidylglycerol to the sulfhydryl group of the N-terminal cysteine of a prolipoprotein, the first step in the formation of mature lipoproteins. This chain is Phosphatidylglycerol--prolipoprotein diacylglyceryl transferase, found in Gluconobacter oxydans (strain 621H) (Gluconobacter suboxydans).